Consider the following 430-residue polypeptide: Asparagine--tRNA ligase (430 aa).

The protein belongs to the class-II aminoacyl-tRNA synthetase family. In terms of assembly, homodimer.

It localises to the cytoplasm. The enzyme catalyses tRNA(Asn) + L-asparagine + ATP = L-asparaginyl-tRNA(Asn) + AMP + diphosphate + H(+). The sequence is that of Asparagine--tRNA ligase from Staphylococcus aureus (strain JH1).